A 233-amino-acid chain; its full sequence is Glutathione S-transferase 2 (233 aa).

The GST N-terminal domain occupies 17–101 (QKMIIYDTPA…YIDALDGTPT (85 aa)). Glutathione contacts are provided by residues Tyr29, His58, Val72, 85 to 86 (EC), and His133. Residues 106–233 (TPLEKGVIHM…KLLEIRSKSS (128 aa)) enclose the GST C-terminal domain.

This sequence belongs to the GST superfamily. As to quaternary structure, homodimer.

It carries out the reaction RX + glutathione = an S-substituted glutathione + a halide anion + H(+). The polypeptide is Glutathione S-transferase 2 (GTT2) (Saccharomyces cerevisiae (strain ATCC 204508 / S288c) (Baker's yeast)).